The following is a 66-amino-acid chain: uncharacterized protein (66 aa).

The chain crosses the membrane as a helical span at residues 11-31; the sequence is PFPLLGVWIIVIIIVAVIGLL.

It localises to the membrane. This is an uncharacterized protein from Chenopodium amaranticolor (Quinoa).